Consider the following 668-residue polypeptide: Spartin (668 aa).

N-acetylmethionine is present on Met-1. In terms of domain architecture, MIT spans 16–94 (IKEAYKKAFV…LQNVRTRLEI (79 aa)). Positions 110–176 (VPKLYPEFPP…PSEAPPAYTP (67 aa)) are disordered. Basic and acidic residues predominate over residues 118-127 (PPKDMSEKSP). A Phosphoserine modification is found at Ser-126. Over residues 128–162 (EPQSLSSLPQHSEVNGSTSTASAESSSTPTTLSLP) the composition is skewed to low complexity. Residues 190 to 380 (ESGEFSSVGE…QLDPSSKDVR (191 aa)) are ubiquitin-binding region (UBR) domain. An LC3-interacting region (LIR); mediates interaction with MAP1LC3A AND MAP1LC3C motif is present at residues 193 to 200 (EFSSVGEN). The disordered stretch occupies residues 348 to 396 (FQIPGISGSASDQLKEASGTDVRQLDPSSKDVRQKGKRGKKTKGTSSEE). A Glycyl lysine isopeptide (Lys-Gly) (interchain with G-Cter in ubiquitin) cross-link involves residue Lys-362. The Senescence domain maps to 427 to 611 (ILSGASWVSW…YNIDNIGIKA (185 aa)). The required for localization to lipid droplets stretch occupies residues 431 to 503 (ASWVSWGLVK…LVDGVCTVAN (73 aa)). Position 470 is a phosphoserine (Ser-470). The tract at residues 631–668 (IDNSKGENPGGGASANLKGEKDEQKEGPEKNGAKKKDK) is disordered. Over residues 648 to 668 (KGEKDEQKEGPEKNGAKKKDK) the composition is skewed to basic and acidic residues.

In terms of assembly, interacts with ITCH and WWP1. Interacts (via MIT domain) with IST1; leading to the recruitment of SPART to midbodies. Interacts with MAP1LC3A and MAP1LC3C. Post-translationally, ubiquitinated; ubiquitination does not require ITCH and WWP1.

The protein resides in the cytoplasm. It is found in the midbody. The protein localises to the lipid droplet. In terms of biological role, lipophagy receptor that plays an important role in lipid droplet (LD) turnover in motor neurons. Localizes to LDs and interacts with components of the autophagy machinery, such as MAP1LC3A/C proteins to deliver LDs to autophagosomes for degradation via lipophagy. Lipid transfer protein required for lipid droplet degradation, including by lipophagy. Can bind and transfer all lipid species found in lipid droplets, from phospholipids to triglycerides and sterol esters but the direction of lipid transfer by spartin and its cargos are unknown. May be implicated in endosomal trafficking, or microtubule dynamics, or both. Participates in cytokinesis. This is Spartin from Bos taurus (Bovine).